The primary structure comprises 131 residues: Large-conductance mechanosensitive channel (131 aa).

A run of 2 helical transmembrane segments spans residues Val21 to Ile41 and Gly76 to Ile96.

The protein belongs to the MscL family. As to quaternary structure, homopentamer.

The protein localises to the cell inner membrane. In terms of biological role, channel that opens in response to stretch forces in the membrane lipid bilayer. May participate in the regulation of osmotic pressure changes within the cell. This Histophilus somni (strain 129Pt) (Haemophilus somnus) protein is Large-conductance mechanosensitive channel.